A 344-amino-acid polypeptide reads, in one-letter code: Dihydroorotate dehydrogenase (quinone) (344 aa).

FMN-binding positions include 65–69 and T89; that span reads AGFDK. K69 contributes to the substrate binding site. Position 114-118 (114-118) interacts with substrate; sequence NRMGF. FMN-binding residues include N145 and N178. A substrate-binding site is contributed by N178. The Nucleophile role is filled by S181. N183 serves as a coordination point for substrate. K215 and T243 together coordinate FMN. 244–245 contributes to the substrate binding site; that stretch reads NT. FMN is bound by residues G269, G298, and 319-320; that span reads YT.

This sequence belongs to the dihydroorotate dehydrogenase family. Type 2 subfamily. As to quaternary structure, monomer. FMN is required as a cofactor.

It localises to the cell membrane. It catalyses the reaction (S)-dihydroorotate + a quinone = orotate + a quinol. It participates in pyrimidine metabolism; UMP biosynthesis via de novo pathway; orotate from (S)-dihydroorotate (quinone route): step 1/1. Functionally, catalyzes the conversion of dihydroorotate to orotate with quinone as electron acceptor. This Clavibacter sepedonicus (Clavibacter michiganensis subsp. sepedonicus) protein is Dihydroorotate dehydrogenase (quinone).